The chain runs to 174 residues: Disulfide bond formation protein B (174 aa).

Residues 1–14 (MLNFLNICSKTRKS) are Cytoplasmic-facing. The helical transmembrane segment at 15 to 31 (WVLLIFTVVILELIALY) threads the bilayer. Topologically, residues 32–49 (LQHIVLIKPCVLCVYQRC) are periplasmic. C41 and C44 are oxidised to a cystine. A helical membrane pass occupies residues 50 to 65 (ALCGIGIAGLIGTIAP). Residues 66 to 71 (FTPLRF) are Cytoplasmic-facing. A helical membrane pass occupies residues 72 to 89 (FSIPIWIYSAWKGLLLAK). At 90 to 144 (EYTDIQLHPSPFFMCDLFVQFPHWLPLNKWWPSMFDADGDCAEYKWYFLSLEISQ) the chain is on the periplasmic side. C104 and C130 form a disulfide bridge. A helical transmembrane segment spans residues 145–163 (WMLIIFANYLIIAILVSLS). Residues 164–174 (QIIDLKKWNNK) lie on the Cytoplasmic side of the membrane.

The protein belongs to the DsbB family.

The protein localises to the cell inner membrane. Its function is as follows. Required for disulfide bond formation in some periplasmic proteins. Acts by oxidizing the DsbA protein. This Blochmanniella pennsylvanica (strain BPEN) protein is Disulfide bond formation protein B.